A 510-amino-acid polypeptide reads, in one-letter code: ATP synthase subunit alpha (510 aa).

169-176 (GDRQTGKT) contacts ATP.

This sequence belongs to the ATPase alpha/beta chains family. F-type ATPases have 2 components, CF(1) - the catalytic core - and CF(0) - the membrane proton channel. CF(1) has five subunits: alpha(3), beta(3), gamma(1), delta(1), epsilon(1). CF(0) has three main subunits: a(1), b(2) and c(9-12). The alpha and beta chains form an alternating ring which encloses part of the gamma chain. CF(1) is attached to CF(0) by a central stalk formed by the gamma and epsilon chains, while a peripheral stalk is formed by the delta and b chains.

The protein resides in the cell membrane. The catalysed reaction is ATP + H2O + 4 H(+)(in) = ADP + phosphate + 5 H(+)(out). Produces ATP from ADP in the presence of a proton gradient across the membrane. The alpha chain is a regulatory subunit. The protein is ATP synthase subunit alpha of Buchnera aphidicola subsp. Schizaphis graminum (strain Sg).